The sequence spans 559 residues: Dihydroxy-acid dehydratase (559 aa).

D78 contacts Mg(2+). C119 serves as a coordination point for [2Fe-2S] cluster. 2 residues coordinate Mg(2+): D120 and K121. K121 bears the N6-carboxylysine mark. A [2Fe-2S] cluster-binding site is contributed by C192. Residue E446 participates in Mg(2+) binding. S472 functions as the Proton acceptor in the catalytic mechanism.

This sequence belongs to the IlvD/Edd family. In terms of assembly, homodimer. The cofactor is [2Fe-2S] cluster. It depends on Mg(2+) as a cofactor.

It carries out the reaction (2R)-2,3-dihydroxy-3-methylbutanoate = 3-methyl-2-oxobutanoate + H2O. The catalysed reaction is (2R,3R)-2,3-dihydroxy-3-methylpentanoate = (S)-3-methyl-2-oxopentanoate + H2O. It functions in the pathway amino-acid biosynthesis; L-isoleucine biosynthesis; L-isoleucine from 2-oxobutanoate: step 3/4. It participates in amino-acid biosynthesis; L-valine biosynthesis; L-valine from pyruvate: step 3/4. Functions in the biosynthesis of branched-chain amino acids. Catalyzes the dehydration of (2R,3R)-2,3-dihydroxy-3-methylpentanoate (2,3-dihydroxy-3-methylvalerate) into 2-oxo-3-methylpentanoate (2-oxo-3-methylvalerate) and of (2R)-2,3-dihydroxy-3-methylbutanoate (2,3-dihydroxyisovalerate) into 2-oxo-3-methylbutanoate (2-oxoisovalerate), the penultimate precursor to L-isoleucine and L-valine, respectively. The chain is Dihydroxy-acid dehydratase from Wolinella succinogenes (strain ATCC 29543 / DSM 1740 / CCUG 13145 / JCM 31913 / LMG 7466 / NCTC 11488 / FDC 602W) (Vibrio succinogenes).